Reading from the N-terminus, the 865-residue chain is DNA mismatch repair protein MutS (865 aa).

Residue 609–616 coordinates ATP; sequence GPNMAGKS.

Belongs to the DNA mismatch repair MutS family.

This protein is involved in the repair of mismatches in DNA. It is possible that it carries out the mismatch recognition step. This protein has a weak ATPase activity. The sequence is that of DNA mismatch repair protein MutS from Leuconostoc citreum (strain KM20).